The sequence spans 421 residues: Eukaryotic translation initiation factor 3 subunit E (421 aa).

A PCI domain is found at Phe-215–Val-394.

The protein belongs to the eIF-3 subunit E family. In terms of assembly, component of the eukaryotic translation initiation factor 3 (eIF-3) complex.

The protein resides in the cytoplasm. In terms of biological role, component of the eukaryotic translation initiation factor 3 (eIF-3) complex, which is involved in protein synthesis of a specialized repertoire of mRNAs and, together with other initiation factors, stimulates binding of mRNA and methionyl-tRNAi to the 40S ribosome. The eIF-3 complex specifically targets and initiates translation of a subset of mRNAs involved in cell proliferation. The protein is Eukaryotic translation initiation factor 3 subunit E of Yarrowia lipolytica (strain CLIB 122 / E 150) (Yeast).